The sequence spans 100 residues: Large ribosomal subunit protein uL23 (100 aa).

This sequence belongs to the universal ribosomal protein uL23 family. Part of the 50S ribosomal subunit. Contacts protein L29, and trigger factor when it is bound to the ribosome.

Its function is as follows. One of the early assembly proteins it binds 23S rRNA. One of the proteins that surrounds the polypeptide exit tunnel on the outside of the ribosome. Forms the main docking site for trigger factor binding to the ribosome. The protein is Large ribosomal subunit protein uL23 of Yersinia enterocolitica serotype O:8 / biotype 1B (strain NCTC 13174 / 8081).